Consider the following 214-residue polypeptide: Large ribosomal subunit protein uL1 (214 aa).

The protein belongs to the universal ribosomal protein uL1 family. Part of the 50S ribosomal subunit.

In terms of biological role, binds directly to 23S rRNA. Probably involved in E site tRNA release. Functionally, protein L1 is also a translational repressor protein, it controls the translation of its operon by binding to its mRNA. In Methanoregula boonei (strain DSM 21154 / JCM 14090 / 6A8), this protein is Large ribosomal subunit protein uL1.